The primary structure comprises 2009 residues: Sodium channel protein type 1 subunit alpha (2009 aa).

The Cytoplasmic portion of the chain corresponds to 1–128 (MEQTVLVPPG…KIAIKILVHS (128 aa)). The span at 28 to 48 (RIAEEKAKNPKPDKKDDDENG) shows a compositional bias: basic and acidic residues. The tract at residues 28–60 (RIAEEKAKNPKPDKKDDDENGPKPNSDLEAGKN) is disordered. Residues 110 to 454 (ILTPFNPLRK…QQMIEQLKKQ (345 aa)) form an I repeat. Residues 129–146 (LFSMLIMCTILTNCVFMT) form a helical membrane-spanning segment. The Extracellular segment spans residues 147–152 (MSNPPD). The chain crosses the membrane as a helical span at residues 153-177 (WTKNVEYTFTGIYTFESLIKIIARG). Over 178–188 (FCLEDFTFLRD) the chain is Cytoplasmic. A helical transmembrane segment spans residues 189–205 (PWNWLDFTVITFAYVTE). At 206 to 213 (FVDLGNVS) the chain is on the extracellular side. A glycan (N-linked (GlcNAc...) asparagine) is linked at N211. Residues 214–235 (ALRTFRVLRALKTISVIPGLKT) form a helical membrane-spanning segment. Residues 236 to 245 (IVGALIQSVK) are Cytoplasmic-facing. A helical membrane pass occupies residues 246 to 269 (KLSDVMILTVFCLSVFALIGLQLF). Residues 270-369 (MGNLRNKCIQ…YGYTSFDTFS (100 aa)) are Extracellular-facing. 2 disulfides stabilise this stretch: C277-C345 and C336-C351. N-linked (GlcNAc...) asparagine glycans are attached at residues N284, N295, N301, N306, and N338. Positions 370–384 (WAFLSLFRLMTQDFW) form an intramembrane region, pore-forming. Residues 385–397 (ENLYQLTLRAAGK) lie on the Extracellular side of the membrane. The chain crosses the membrane as a helical span at residues 398–423 (TYMIFFVLVIFLGSFYLINLILAVVA). Residues 424 to 768 (MAYEEQNQAT…HVVNLVVMDP (345 aa)) lie on the Cytoplasmic side of the membrane. The disordered stretch occupies residues 455-529 (QEAAQQAATA…FQKSESEDSI (75 aa)). Positions 456 to 466 (EAAQQAATATA) are enriched in low complexity. Phosphoserine is present on S470. Positions 479-492 (LSDSSSEASKLSSK) are enriched in low complexity. Over residues 495-506 (KERRNRRKKRKQ) the composition is skewed to basic residues. Over residues 520-529 (FQKSESEDSI) the composition is skewed to basic and acidic residues. S523, S525, S550, S551, S607, and S730 each carry phosphoserine. The disordered stretch occupies residues 584-627 (VGSENDFADDEHSTFEDNESRRDSLFVPRRHGERRNSNLSQTSR). A compositionally biased stretch (basic and acidic residues) spans 593-607 (DEHSTFEDNESRRDS). Residues 750 to 1022 (CSPYWLKVKH…QIAVDRMHKG (273 aa)) form an II repeat. Residues 769–787 (FVDLAITICIVLNTLFMAM) form a helical membrane-spanning segment. The Extracellular segment spans residues 788–797 (EHYPMTDHFN). A helical transmembrane segment spans residues 798–820 (NVLTVGNLVFTGIFTAEMFLKII). The Cytoplasmic portion of the chain corresponds to 821–830 (AMDPYYYFQE). Residues 831-849 (GWNIFDGFIVTLSLVELGL) form a helical membrane-spanning segment. The Extracellular segment spans residues 850–854 (ANVEG). A helical transmembrane segment spans residues 855-874 (LSVLRSFRLLRVFKLAKSWP). Topologically, residues 875 to 891 (TLNMLIKIIGNSVGALG) are cytoplasmic. A helical transmembrane segment spans residues 892-912 (NLTLVLAIIVFIFAVVGMQLF). The Extracellular segment spans residues 913-938 (GKSYKDCVCKIASDCQLPRWHMNDFF). C921 and C927 are disulfide-bonded. The segment at residues 939–952 (HSFLIVFRVLCGEW) is an intramembrane region (pore-forming). Topologically, residues 953–965 (IETMWDCMEVAGQ) are extracellular. A disulfide bridge links C959 with C968. The helical transmembrane segment at 966-992 (AMCLTVFMMVMVIGNLVVLNLFLALLL) threads the bilayer. The Cytoplasmic segment spans residues 993 to 1218 (SSFSADNLAA…RTCFRIVEHN (226 aa)). The disordered stretch occupies residues 1129–1163 (TEDFSSESDLEESKEKLNESSSSSEGSTVDIGAPV). Residues 1200-1514 (RGKQWWNLRR…KKYYNAMKKL (315 aa)) form an III repeat. The chain crosses the membrane as a helical span at residues 1219 to 1237 (WFETFIVFMILLSSGALAF). Residues 1238–1250 (EDIYIDQRKTIKT) lie on the Extracellular side of the membrane. The chain crosses the membrane as a helical span at residues 1251-1276 (MLEYADKVFTYIFILEMLLKWVAYGY). Residues 1277–1278 (QT) lie on the Cytoplasmic side of the membrane. Residues 1279–1304 (YFTNAWCWLDFLIVDVSLVSLTANAL) traverse the membrane as a helical segment. The Extracellular segment spans residues 1305 to 1313 (GYSELGAIK). The helical transmembrane segment at 1314–1332 (SLRTLRALRPLRALSRFEG) threads the bilayer. Topologically, residues 1333–1345 (MRVVVNALLGAIP) are cytoplasmic. The helical transmembrane segment at 1346–1369 (SIMNVLLVCLIFWLIFSIMGVNLF) threads the bilayer. The Extracellular segment spans residues 1370–1415 (AGKFYHCINTTTGDRFDIEDVNNHTDCLKLIERNETARWKNVKVNF). A disulfide bond links C1376 and C1396. 3 N-linked (GlcNAc...) asparagine glycosylation sites follow: N1378, N1392, and N1403. The segment at residues 1416–1433 (DNVGFGYLSLLQVATFKG) is an intramembrane region (pore-forming). Over 1434–1457 (WMDIMYAAVDSRNVELQPKYEESL) the chain is Extracellular. A helical transmembrane segment spans residues 1458 to 1483 (YMYLYFVIFIIFGSFFTLNLFIGVII). Over 1484-1541 (DNFNQQKKKFGGQDIFMTEEQKKYYNAMKKLGSKKPQKPIPRPGNKFQGMVFDFVTRQ) the chain is Cytoplasmic. Residue S1516 is modified to Phosphoserine; by PKC. The IV repeat unit spans residues 1523–1821 (IPRPGNKFQG…WEKFDPDATQ (299 aa)). The helical transmembrane segment at 1542–1560 (VFDISIMILICLNMVTMMV) threads the bilayer. Over 1561–1571 (ETDDQSEYVTT) the chain is Extracellular. The S1-S2 loop of repeat IV stretch occupies residues 1561–1571 (ETDDQSEYVTT). A helical transmembrane segment spans residues 1572–1593 (ILSRINLVFIVLFTGECVLKLI). The Cytoplasmic portion of the chain corresponds to 1594–1601 (SLRHYYFT). The chain crosses the membrane as a helical span at residues 1602–1623 (IGWNIFDFVVVILSIVGMFLAE). The interval 1619-1636 (MFLAELIEKYFVSPTLFR) is S3b-S4 loop of repeat IV. The Extracellular segment spans residues 1624 to 1636 (LIEKYFVSPTLFR). The helical transmembrane segment at 1637–1655 (VIRLARIGRILRLIKGAKG) threads the bilayer. Residues 1656–1665 (IRTLLFALMM) are Cytoplasmic-facing. The chain crosses the membrane as a helical span at residues 1666-1688 (SLPALFNIGLLLFLVMFIYAIFG). Topologically, residues 1689–1711 (MSNFAYVKREVGIDDMFNFETFG) are extracellular. Positions 1712–1726 (NSMICLFQITTSAGW) form an intramembrane region, pore-forming. The Extracellular segment spans residues 1727 to 1759 (DGLLAPILNSKPPDCDPNKVNPGSSVKGDCGNP). C1741 and C1756 form a disulfide bridge. The chain crosses the membrane as a helical span at residues 1760-1788 (SVGIFFFVSYIIISFLVVVNMYIAVILEN). At 1789-2009 (FSVATEESAE…EGKDEKAKGK (221 aa)) the chain is on the cytoplasmic side. An IQ domain is found at 1915–1944 (EEVSAVIIQRAYRRHLLKRTVKQASFTYNK). The segment at 1986–2009 (YDRVTKPIVEKHEQEGKDEKAKGK) is disordered. The segment covering 1988-2009 (RVTKPIVEKHEQEGKDEKAKGK) has biased composition (basic and acidic residues).

This sequence belongs to the sodium channel (TC 1.A.1.10) family. Nav1.1/SCN1A subfamily. The Nav1.1 voltage-gated sodium channel consists of an ion-conducting alpha subunit SCN1A which is functional on its own regulated by one or more beta-1 (SCN1B), beta-2 (SCN2B), beta-3 (SCN3B) and beta-4 (SCN4B) subunits. SCN1B and SCN3B are non-covalently associated with SCN1A. SCN2B and SCN4B are disulfide-linked to SCN1A. SCN1B regulates both the expression at the plasma membrane and the voltage dependence of Nav1.1 inactivation. SCN3B and SCN4B reduce Nav1.1 conductance. Probably interacts with TMEM233; modulates the gating properties of NaV1.1. Interacts with FGF13; regulates the steady-state inactivation of Nav.1.1. Post-translationally, phosphorylation at Ser-1516 by PKC in a highly conserved cytoplasmic loop slows inactivation of the sodium channel and reduces peak sodium currents.

The protein localises to the cell membrane. The enzyme catalyses Na(+)(in) = Na(+)(out). With respect to regulation, activated by the spider toxins Hm1a and Hm1b (H.maculata, AC P60992 and AC P0DOC5) eliciting acute pain and mechanical allodynia. Inhibited by the conotoxin GVIIJ. Inhibited by the spider beta/delta-theraphotoxin-Pre1a. Pore-forming subunit of Nav1.1, a voltage-gated sodium (Nav) channel that directly mediates the depolarizing phase of action potentials in excitable membranes. Navs, also called VGSCs (voltage-gated sodium channels) or VDSCs (voltage-dependent sodium channels), operate by switching between closed and open conformations depending on the voltage difference across the membrane. In the open conformation they allow Na(+) ions to selectively pass through the pore, along their electrochemical gradient. The influx of Na(+) ions provokes membrane depolarization, initiating the propagation of electrical signals throughout cells and tissues. By regulating the excitability of neurons, ensures that they respond appropriately to synaptic inputs, maintaining the balance between excitation and inhibition in brain neural circuits. Nav1.1 plays a role in controlling the excitability and action potential propagation from somatosensory neurons, thereby contributing to the sensory perception of mechanically-induced pain. The protein is Sodium channel protein type 1 subunit alpha of Homo sapiens (Human).